We begin with the raw amino-acid sequence, 65 residues long: Large ribosomal subunit protein bL35c (65 aa).

Basic residues predominate over residues 25–44; that stretch reads HKASKSHLLQKKSSKQRRHL. The tract at residues 25 to 45 is disordered; the sequence is HKASKSHLLQKKSSKQRRHLS.

This sequence belongs to the bacterial ribosomal protein bL35 family.

Its subcellular location is the plastid. The protein localises to the chloroplast. This chain is Large ribosomal subunit protein bL35c, found in Pyropia yezoensis (Susabi-nori).